A 91-amino-acid chain; its full sequence is Gene 76 protein (91 aa).

Residues 58 to 81 (ELPSCDESPKGEARRDNDNRDGGK) form a disordered region.

The sequence is that of Gene 76 protein (76) from Mycobacterium phage L5 (Mycobacteriophage L5).